Consider the following 557-residue polypeptide: TGF-beta receptor type-2 (557 aa).

The N-terminal stretch at 1–23 is a signal peptide; it reads MPPRLRPLLLRVSLWVLVGSSSP. Over 24–155 the chain is Extracellular; that stretch reads ALLHDRSKEN…KPEEKDEISK (132 aa). Intrachain disulfides connect Cys-41–Cys-74, Cys-44–Cys-61, Cys-51–Cys-57, Cys-67–Cys-91, Cys-111–Cys-126, and Cys-128–Cys-133. N-linked (GlcNAc...) asparagine glycans are attached at residues Asn-62 and Asn-84. The helical transmembrane segment at 156–176 threads the bilayer; that stretch reads VTIISLVPLLVISVAVIVIFY. The Cytoplasmic portion of the chain corresponds to 177–557; it reads AYRTHKKRKL…PEDGSVTTAK (381 aa). The region spanning 234 to 537 is the Protein kinase domain; sequence IELDIVVGKG…FSEFKHHDKL (304 aa). ATP is bound by residues 240 to 248 and Lys-267; that span reads VGKGRFAEV. The Proton acceptor role is filled by Asp-369.

It belongs to the protein kinase superfamily. TKL Ser/Thr protein kinase family. TGFB receptor subfamily. In terms of assembly, heterohexamer; TGFB1, TGFB2 and TGFB3 homodimeric ligands assemble a functional receptor composed of two TGFBR1 and TGFBR2 heterodimers to form a ligand-receptor heterohexamer. It depends on Mg(2+) as a cofactor. Requires Mn(2+) as cofactor. Phosphorylated on a Ser/Thr residue in the cytoplasmic domain. As to expression, detected at low levels in embryonic heart, brain and lung. Detected at high levels in hatchling heart and lung.

It is found in the cell membrane. The protein resides in the membrane raft. It carries out the reaction L-threonyl-[receptor-protein] + ATP = O-phospho-L-threonyl-[receptor-protein] + ADP + H(+). The enzyme catalyses L-seryl-[receptor-protein] + ATP = O-phospho-L-seryl-[receptor-protein] + ADP + H(+). Transmembrane serine/threonine kinase forming with the TGF-beta type I serine/threonine kinase receptor, TGFBR1, the non-promiscuous receptor for the TGF-beta cytokines TGFB1, TGFB2 and TGFB3. Transduces the TGFB1, TGFB2 and TGFB3 signal from the cell surface to the cytoplasm and is thus regulating a plethora of physiological and pathological processes including cell cycle arrest in epithelial and hematopoietic cells, control of mesenchymal cell proliferation and differentiation, wound healing, extracellular matrix production, immunosuppression and carcinogenesis. The formation of the receptor complex composed of 2 TGFBR1 and 2 TGFBR2 molecules symmetrically bound to the cytokine dimer results in the phosphorylation and the activation of TGFRB1 by the constitutively active TGFBR2. Activated TGFBR1 phosphorylates SMAD2 which dissociates from the receptor and interacts with SMAD4. The SMAD2-SMAD4 complex is subsequently translocated to the nucleus where it modulates the transcription of the TGF-beta-regulated genes. This constitutes the canonical SMAD-dependent TGF-beta signaling cascade. Also involved in non-canonical, SMAD-independent TGF-beta signaling pathways. The polypeptide is TGF-beta receptor type-2 (TGFBR2) (Gallus gallus (Chicken)).